We begin with the raw amino-acid sequence, 1750 residues long: Brefeldin A-inhibited guanine nucleotide-exchange protein 3 (1750 aa).

N-acetylalanine is present on alanine 2. 2 disordered regions span residues 44 to 65 (LRSP…IPGP) and 565 to 596 (EEGS…SSGN). The segment covering 47 to 61 (PENSSPVADSESGSS) has biased composition (polar residues). The span at 565–588 (EEGSHPVENGKGDGGHGGFERSDS) shows a compositional bias: basic and acidic residues. Serine 586 is subject to Phosphoserine. The SEC7 domain occupies 601-788 (AIEQRRAYKL…RALYERISRN (188 aa)). Glutamate 703 is a catalytic residue. Residue serine 1307 is modified to Phosphoserine.

As to quaternary structure, homodimer.

Its subcellular location is the cytoplasm. The protein localises to the cytosol. It localises to the membrane. Its activity is regulated as follows. Inhibited by brefeldin A. Activates the ARF proteins by exchanging bound GDP for free GTP. Plays a role in vesicular protein sorting. Involved both in the nuclear division phase and in the nuclear fusion phase. This Arabidopsis thaliana (Mouse-ear cress) protein is Brefeldin A-inhibited guanine nucleotide-exchange protein 3 (BIG3).